Consider the following 93-residue polypeptide: Small ribosomal subunit protein uS19 (93 aa).

The interval 74 to 93 (FSPTRTFRGHVKDDRKSKRR) is disordered. Residues 83 to 93 (HVKDDRKSKRR) are compositionally biased toward basic and acidic residues.

This sequence belongs to the universal ribosomal protein uS19 family.

Its function is as follows. Protein S19 forms a complex with S13 that binds strongly to the 16S ribosomal RNA. This is Small ribosomal subunit protein uS19 from Streptomyces griseus subsp. griseus (strain JCM 4626 / CBS 651.72 / NBRC 13350 / KCC S-0626 / ISP 5235).